The primary structure comprises 215 residues: Sodium channel regulatory subunit beta-3 (215 aa).

Positions 1–24 are cleaved as a signal peptide; the sequence is MPAFNRLLPLASLVLIYWVRVCFP. Residues 25 to 138 enclose the Ig-like C2-type domain; it reads VCVEVPSETE…EAHRPFVKTT (114 aa). Over 25–156 the chain is Extracellular; the sequence is VCVEVPSETE…EEAGEDFTSV (132 aa). Intrachain disulfides connect C26/C48 and C45/C120. N-linked (GlcNAc...) asparagine glycosylation is found at N95, N109, N113, and N121. Residues 157–178 form a helical membrane-spanning segment; it reads VSEIMMYILLVFLTLWLFIEMI. Residues 179–215 are Cytoplasmic-facing; sequence YCYRKVSKAEEAAQENASDYLAIPSENKENSVVPVEE.

It belongs to the sodium channel auxiliary subunit SCN3B (TC 8.A.17) family. In terms of assembly, a voltage-gated sodium (Nav) channel consists of an ion-conducting pore-forming alpha subunit functional on its own that is regulated by one or more beta subunits. Forms homodimers and homotrimers. SCN3B is non-covalently associated with alpha subunits and induces the formation of alpha subunit oligomers, including trimers. Interacts with SCN5A/Nav1.5; regulatory subunit of SCN5A/Nav1.5. Interacts with SCN7A/Nav2.1; probable regulatory subunit of SCN7A/Nav2.1. Interacts with SCN10A; regulatory subunit of SCN10A/Nav1.8. Interacts with NFASC; probably involved in targeting the sodium channels to the nodes of Ranvier. Post-translationally, intramolecular disulfide bonds favor the voltage-gated sodium channel oligomeric complex assembly. In terms of processing, N-glycosylated. As to expression, expressed broadly in neurons in the central and peripheral nervous systems, but not in glia and most non-neuronal cells. Weak detection in lung and adrenal gland.

It localises to the cell membrane. Its function is as follows. Regulatory subunit of multiple voltage-gated sodium (Nav) channels directly mediating the depolarization of excitable membranes. Navs, also called VGSCs (voltage-gated sodium channels) or VDSCs (voltage-dependent sodium channels), operate by switching between closed and open conformations depending on the voltage difference across the membrane. In the open conformation they allow Na(+) ions to selectively pass through the pore, along their electrochemical gradient. The influx of Na+ ions provokes membrane depolarization, initiating the propagation of electrical signals throughout cells and tissues. The accessory beta subunits participate in localization and functional modulation of the Nav channels. Voltage-gated sodium channels regulatory subunit that modulates channel gating kinetics. Modulates the activity of SCN2A/Nav1.2, causing a hyperpolarizing shift in the voltage-dependence of inactivation and increasing the fraction of channels operating in the fast gating mode. Also able to induce unique persistent SCN2A/Nav1.2-mediated sodium currents. Could modulate the activity of SCN10A/Nav1.8. This chain is Sodium channel regulatory subunit beta-3, found in Rattus norvegicus (Rat).